The primary structure comprises 240 residues: Lactate utilization protein C (240 aa).

It belongs to the LutC/YkgG family.

In terms of biological role, is involved in L-lactate degradation and allows cells to grow with lactate as the sole carbon source. In Bacillus pumilus (strain SAFR-032), this protein is Lactate utilization protein C.